The sequence spans 298 residues: Lipoyl synthase (298 aa).

Residues Cys40, Cys45, Cys51, Cys67, Cys71, Cys74, and Ser280 each coordinate [4Fe-4S] cluster. Residues 53–269 enclose the Radical SAM core domain; it reads AVRKTATFMI…KEIALSKGFS (217 aa).

It belongs to the radical SAM superfamily. Lipoyl synthase family. Requires [4Fe-4S] cluster as cofactor.

It is found in the cytoplasm. It catalyses the reaction [[Fe-S] cluster scaffold protein carrying a second [4Fe-4S](2+) cluster] + N(6)-octanoyl-L-lysyl-[protein] + 2 oxidized [2Fe-2S]-[ferredoxin] + 2 S-adenosyl-L-methionine + 4 H(+) = [[Fe-S] cluster scaffold protein] + N(6)-[(R)-dihydrolipoyl]-L-lysyl-[protein] + 4 Fe(3+) + 2 hydrogen sulfide + 2 5'-deoxyadenosine + 2 L-methionine + 2 reduced [2Fe-2S]-[ferredoxin]. It participates in protein modification; protein lipoylation via endogenous pathway; protein N(6)-(lipoyl)lysine from octanoyl-[acyl-carrier-protein]. Its function is as follows. Catalyzes the radical-mediated insertion of two sulfur atoms into the C-6 and C-8 positions of the octanoyl moiety bound to the lipoyl domains of lipoate-dependent enzymes, thereby converting the octanoylated domains into lipoylated derivatives. The chain is Lipoyl synthase from Bacillus mycoides (strain KBAB4) (Bacillus weihenstephanensis).